A 501-amino-acid chain; its full sequence is Endonuclease domain-containing 1 protein (501 aa).

Residues methionine 1–alanine 21 form the signal peptide. Lysine 408 carries the post-translational modification N6-acetyllysine.

It belongs to the DNA/RNA non-specific endonuclease family. Interacts with RNF26; this interaction is important to modulate innate immune signaling through the cGAS-STING pathway.

It is found in the secreted. Functionally, may act as a DNase and a RNase. Plays a role in the modulation of innate immune signaling through the cGAS-STING pathway by interacting with RNF26. This is Endonuclease domain-containing 1 protein (Endod1) from Mus musculus (Mouse).